A 228-amino-acid chain; its full sequence is Leucine rich adaptor protein 1-like (228 aa).

N-acetylmethionine is present on M1. The interval 1–89 (MEDSPLPDLR…GSPRGSHSSA (89 aa)) is disordered. Composition is skewed to basic and acidic residues over residues 8–21 (DLRDIELKLGRKVP) and 28–42 (LRGEEPVPRERDRDP). Gly residues predominate over residues 44–56 (GGSGGGGGGGGGC). Over residues 57–88 (SSSSSYCSFPPSLSSSSSSSPTSGSPRGSHSS) the composition is skewed to low complexity.

The chain is Leucine rich adaptor protein 1-like (LURAP1L) from Homo sapiens (Human).